The following is a 215-amino-acid chain: Nucleoredoxin-like protein 1 (215 aa).

In terms of domain architecture, Thioredoxin; atypical spans M1 to L165. Basic and acidic residues predominate over residues I185–E194. Residues I185–F215 are disordered.

It belongs to the nucleoredoxin family.

Its subcellular location is the cell projection. The protein localises to the cilium. It is found in the photoreceptor outer segment. In terms of biological role, plays an important role in retinal cone photoreceptor survival. May play a role in cone cell viability, slowing down cone degeneration, does not seem to play a role in degenerating rods. The chain is Nucleoredoxin-like protein 1 (nxnl1) from Xenopus laevis (African clawed frog).